We begin with the raw amino-acid sequence, 84 residues long: Exodeoxyribonuclease 7 small subunit (84 aa).

Belongs to the XseB family. Heterooligomer composed of large and small subunits.

The protein resides in the cytoplasm. It catalyses the reaction Exonucleolytic cleavage in either 5'- to 3'- or 3'- to 5'-direction to yield nucleoside 5'-phosphates.. Bidirectionally degrades single-stranded DNA into large acid-insoluble oligonucleotides, which are then degraded further into small acid-soluble oligonucleotides. The protein is Exodeoxyribonuclease 7 small subunit of Yersinia enterocolitica serotype O:8 / biotype 1B (strain NCTC 13174 / 8081).